Consider the following 416-residue polypeptide: Iron-regulated transcriptional activator AFT2 (416 aa).

Asp-53 is a binding site for Zn(2+). DNA is bound by residues Arg-54, His-55, Lys-58, Ile-74, Glu-75, Arg-76, Ser-77, Asp-78, and Lys-81. Residue His-55 participates in Zn(2+) binding. Cys-86 is a Zn(2+) binding site. Ser-88 is a binding site for DNA. Cys-109 lines the Zn(2+) pocket. Positions 119 and 120 each coordinate DNA. Zn(2+) is bound by residues His-133 and His-135. 2 residues coordinate DNA: Gln-157 and Asn-159. The CDC [2Fe-2S] cluster binding motif signature appears at 187-189 (CDC).

As to quaternary structure, homodimer. Dimerization decreases the DNA-binding activity.

It is found in the nucleus. With respect to regulation, dimerization via the binding of Fe(2+) or a [2Fe-2S] cluster decreases the DNA-binding activity. Transcription factor required for iron homeostasis and resistance to oxidative stress. With AFT1, activates the gene expression in response to low-iron conditions, also called iron regulon. Recognizes the consensus iron-responsive element (Fe-RE) sequence 5'-CACCC-3' in the promoters of target genes. The transcription activation by AFT1 and AFT2 depends on the mitochondrial iron-sulfur protein biosynthesis pathway. In high iron condition, the presence of iron leads to dimerization, which in turn leads to a decrease in DNA affinity. In Saccharomyces cerevisiae (strain ATCC 204508 / S288c) (Baker's yeast), this protein is Iron-regulated transcriptional activator AFT2.